Here is a 162-residue protein sequence, read N- to C-terminus: Transmembrane protein 92 (162 aa).

Residues methionine 1 to glycine 22 form the signal peptide. At valine 23–arginine 63 the chain is on the extracellular side. Residues phenylalanine 64–leucine 84 traverse the membrane as a helical segment. Residues phenylalanine 85–leucine 162 are Cytoplasmic-facing. Positions threonine 134–leucine 162 are disordered.

Its subcellular location is the membrane. The polypeptide is Transmembrane protein 92 (Tmem92) (Mus musculus (Mouse)).